We begin with the raw amino-acid sequence, 188 residues long: Antitoxin SocA (188 aa).

As to quaternary structure, interacts with cognate toxin SocB and with ClpX.

Antitoxin component of an atypical type II toxin-antitoxin (TA) system. Unlike most type II TA systems, neutralizes the toxic activity of cognate toxin SocB by acting as an adapter to promote its degradation by ClpXP; degradation is dependent on the N-terminus of ClpX. The sequence is that of Antitoxin SocA from Caulobacter vibrioides (strain NA1000 / CB15N) (Caulobacter crescentus).